A 134-amino-acid polypeptide reads, in one-letter code: uncharacterized protein (134 aa).

This is an uncharacterized protein from Acanthamoeba polyphaga (Amoeba).